We begin with the raw amino-acid sequence, 356 residues long: MLGKTVLLPLLVLLCHSLASASLVYRGADISSLLIEEKAGIEYKNVNGQTQPLENILKANGVNSVRQRVWVNPSDGSYNLDYNVKLAKRVKAAGMSVYLDLHFSDTWADPSHQTTPRGWSTNDIGTLTWQVYNYTMEVCNTFASNGIDVSIVAIGNEIRNGLLWPLGKPDNYANIANILHSAAFGVKDSTLSPKPKIMIHLDNGWDWSAQKFFYDRVLSSGANLVKSDFDLIGVSYYPFYNPSATLSALTTSLKNLRSTYGKDVLVVETDWPVLCPNPAYAFPSDLKDIPFSVAGQTTFVQRVANIVAQTPGGIGLYYWEPAWVQNAALGSSCADNLMVDWSTRQARTSLSVFATI.

The N-terminal stretch at 1–21 is a signal peptide; that stretch reads MLGKTVLLPLLVLLCHSLASA. Asn133 carries an N-linked (GlcNAc...) asparagine glycan. Catalysis depends on Glu157, which acts as the Proton donor. Glu268 (nucleophile) is an active-site residue.

This sequence belongs to the glycosyl hydrolase 53 family.

The protein localises to the secreted. The enzyme catalyses The enzyme specifically hydrolyzes (1-&gt;4)-beta-D-galactosidic linkages in type I arabinogalactans.. Endogalactanase involved in the degradation of plant cell wall polysaccharides, and more particularly of hairy regions of pectin. The sequence is that of Probable arabinogalactan endo-beta-1,4-galactanase A (galA) from Aspergillus fumigatus (strain CBS 144.89 / FGSC A1163 / CEA10) (Neosartorya fumigata).